Reading from the N-terminus, the 247-residue chain is 2,3-bisphosphoglycerate-dependent phosphoglycerate mutase (247 aa).

Residues 8–15 (RHGESVWN), 21–22 (TG), Arg-60, 87–90 (ERHY), Lys-98, 114–115 (RR), and 183–184 (GN) contribute to the substrate site. His-9 (tele-phosphohistidine intermediate) is an active-site residue. Glu-87 serves as the catalytic Proton donor/acceptor.

It belongs to the phosphoglycerate mutase family. BPG-dependent PGAM subfamily.

The catalysed reaction is (2R)-2-phosphoglycerate = (2R)-3-phosphoglycerate. It functions in the pathway carbohydrate degradation; glycolysis; pyruvate from D-glyceraldehyde 3-phosphate: step 3/5. Its function is as follows. Catalyzes the interconversion of 2-phosphoglycerate and 3-phosphoglycerate. The polypeptide is 2,3-bisphosphoglycerate-dependent phosphoglycerate mutase (Thermobifida fusca (strain YX)).